We begin with the raw amino-acid sequence, 509 residues long: Maturase K (509 aa).

The protein belongs to the intron maturase 2 family. MatK subfamily.

The protein resides in the plastid. It localises to the chloroplast. Functionally, usually encoded in the trnK tRNA gene intron. Probably assists in splicing its own and other chloroplast group II introns. The protein is Maturase K of Citrus sinensis (Sweet orange).